Reading from the N-terminus, the 23-residue chain is Lycosin-II (23 aa).

Position 21 is a leucine amide (leucine 21).

As to expression, expressed by the venom gland.

The protein localises to the secreted. Its subcellular location is the target cell membrane. Its function is as follows. Has strong antibacterial activity and biofilm inhibition effects against Gram-positive and -negative bacteria including E.coli, S.epidermidis, and A.baumannii and oxacillin-resistant S.aureus and meropenem-resistant P.aeruginosa. Is not cytotoxic against human foreskin fibroblast Hs27 or hemolytic against mammalian red blood cells. Its mechanism of action involves binding to lipoteichoic acid and lipopolysaccharide of Gram-positive and Gram-negative bacterial membranes, respectively, to destroy the bacterial membrane. In addition, it shows anti-inflammatory effects by inhibiting the expression of pro-inflammatory cytokines that are increased during bacterial infection in Hs27 cells. This Lycosa singoriensis (Wolf spider) protein is Lycosin-II.